We begin with the raw amino-acid sequence, 735 residues long: F-box and leucine-rich repeat protein 13 (735 aa).

Residues 152–198 (KCDISLLPERAILQIFFYLSLKDVIICGQVNHAWMLMTQLNSLWNAI) enclose the F-box domain. LRR repeat units lie at residues 230–254 (GCLL…NVSD), 255–280 (CPTF…NLSN), 281–305 (TTIT…SLAY), 306–333 (CRRF…DLSG), 334–359 (CTQI…TIND), 360–385 (MPTL…VFTG), 386–406 (APHI…RKIR), 410–435 (NKRV…YMAD), 436–460 (CKGI…NLAN), 461–488 (CVRI…NLSN), 489–514 (CVRL…SLRN), 515–538 (CEHL…IDLS), 539–563 (GTDI…SVSE), 564–589 (CYRI…DVSY), 590–615 (CSQL…SIAG), 616–641 (CPKI…DISG), and 642–667 (CVLL…KMQY). The span at 682 to 692 (KVQQQEYNTND) shows a compositional bias: polar residues. A disordered region spans residues 682–703 (KVQQQEYNTNDPPRWFGYDREG).

This sequence belongs to the DRC6 family. Component of the nexin-dynein regulatory complex (N-DRC). Directly interacts with SKP1 and CUL1. Interacts with TCTE1/DRC5.

It localises to the cytoplasm. The protein resides in the cytoskeleton. Its subcellular location is the flagellum axoneme. It is found in the microtubule organizing center. The protein localises to the centrosome. In terms of biological role, substrate-recognition component of the SCF (SKP1-CUL1-F-box protein)-type E3 ubiquitin ligase complex. Component of the nexin-dynein regulatory complex (N-DRC), a key regulator of ciliary/flagellar motility which maintains the alignment and integrity of the distal axoneme and regulates microtubule sliding in motile axonemes. Specifically targets CEP192 isoform 3 for ubiquitin-mediated proteolysis and thereby acts as a regulator of microtubule nucleation activity. The polypeptide is F-box and leucine-rich repeat protein 13 (FBXL13) (Homo sapiens (Human)).